The following is a 504-amino-acid chain: MSFSVDVLANIAIELQRGIGHQDRFQRLITTLRQVLECDASALLRYDSRQFIPLAIDGLAKDVLGRRFALEGHPRLEAIARAGDVVRFPADSELPDPYDGLIPGQESLKVHACVGLPLFAGQNLIGALTLDGMQPDQFDVFSDEELRLIAALAAGALSNALLIEQLESQNMLPGDAAPFEAVKQTQMIGLSPGMTQLKKEIEIVAASDLNVLISGETGTGKELVAKAIHEASPRAVNPLVYLNCAALPESVAESELFGHVKGAFTGAISNRSGKFEMADNGTLFLDEIGELSLALQAKLLRVLQYGDIQRVGDDRSLRVDVRVLAATNRDLREEVLAGRFRADLFHRLSVFPLSVPPLRERGDDVILLAGYFCEQCRLRLGLSRVVLSAGARNLLQHYNFPGNVRELEHAIHRAVVLARATRSGDEVILEAQHFAFPEVTLPPPEAAAVPVVKQNLREATEAFQRETIRQALAQNHHNWAACARMLETDVANLHRLAKRLGLKD.

D57 bears the 4-aspartylphosphate mark. A Sigma-54 factor interaction domain is found at 187-416; sequence MIGLSPGMTQ…LEHAIHRAVV (230 aa). ATP is bound by residues 215 to 222 and 278 to 287; these read GETGTGKE and ADNGTLFLDE. A DNA-binding region (H-T-H motif) is located at residues 479 to 498; the sequence is WAACARMLETDVANLHRLAK.

The protein operates within nitrogen metabolism; nitric oxide reduction. In terms of biological role, required for the expression of anaerobic nitric oxide (NO) reductase, acts as a transcriptional activator for at least the norVW operon. Activation also requires sigma-54. This chain is Anaerobic nitric oxide reductase transcription regulator NorR, found in Escherichia coli O6:K15:H31 (strain 536 / UPEC).